Consider the following 601-residue polypeptide: 3-hydroxy-3-methylglutaryl-coenzyme A reductase (601 aa).

A disordered region spans residues 1 to 34 (MDSRRRSPTVTAKAAAGELPLAPHEGQNQQPSIP). 2 helical membrane passes run 36 to 58 (SSDVLPLPLYLANGVFFTLFFSV) and 86 to 106 (ALASLIASVIYLVSFFGLDFV). The tract at residues 107–179 (QSLIYKPNNE…PLITPQNSEE (73 aa)) is linker. Positions 180–601 (DEDIIKAVVA…IASSQLESDS (422 aa)) are catalytic. Residue E273 is the Charge relay system of the active site. The N-linked (GlcNAc...) asparagine glycan is linked to N337. Catalysis depends on charge relay system residues K405 and D481. Residue H579 is the Proton donor of the active site. N-linked (GlcNAc...) asparagine glycosylation occurs at N583.

The protein belongs to the HMG-CoA reductase family.

The protein resides in the endoplasmic reticulum membrane. The catalysed reaction is (R)-mevalonate + 2 NADP(+) + CoA = (3S)-3-hydroxy-3-methylglutaryl-CoA + 2 NADPH + 2 H(+). It functions in the pathway metabolic intermediate biosynthesis; (R)-mevalonate biosynthesis; (R)-mevalonate from acetyl-CoA: step 3/3. Catalyzes the synthesis of mevalonate. The specific precursor of all isoprenoid compounds present in plants. The sequence is that of 3-hydroxy-3-methylglutaryl-coenzyme A reductase (HMGR) from Catharanthus roseus (Madagascar periwinkle).